We begin with the raw amino-acid sequence, 452 residues long: Probable pectate lyase 9 (452 aa).

Residues 1–25 (MATSSLKLTSACFVLLFIFVGCVLT) form the signal peptide. 4 N-linked (GlcNAc...) asparagine glycosylation sites follow: Asn-88, Asn-139, Asn-214, and Asn-233. A Ca(2+)-binding site is contributed by Asp-250. Asn-271 carries N-linked (GlcNAc...) asparagine glycosylation. The Ca(2+) site is built by Asp-274 and Asp-278. N-linked (GlcNAc...) asparagine glycans are attached at residues Asn-281 and Asn-305. Arg-330 is a catalytic residue. An N-linked (GlcNAc...) asparagine glycan is attached at Asn-374.

It belongs to the polysaccharide lyase 1 family. It depends on Ca(2+) as a cofactor.

It catalyses the reaction Eliminative cleavage of (1-&gt;4)-alpha-D-galacturonan to give oligosaccharides with 4-deoxy-alpha-D-galact-4-enuronosyl groups at their non-reducing ends.. It functions in the pathway glycan metabolism; pectin degradation; 2-dehydro-3-deoxy-D-gluconate from pectin: step 2/5. This chain is Probable pectate lyase 9, found in Arabidopsis thaliana (Mouse-ear cress).